The chain runs to 585 residues: A-type ATP synthase subunit A (585 aa).

231-238 contacts ATP; that stretch reads GPFGSGKT.

It belongs to the ATPase alpha/beta chains family. As to quaternary structure, has multiple subunits with at least A(3), B(3), C, D, E, F, H, I and proteolipid K(x).

Its subcellular location is the cell membrane. It carries out the reaction ATP + H2O + 4 H(+)(in) = ADP + phosphate + 5 H(+)(out). In terms of biological role, produces ATP from ADP in the presence of a proton gradient across the membrane. The archaeal alpha chain is a catalytic subunit. Functionally, component of the A-type ATP synthase that produces ATP from ADP in the presence of a proton gradient across the membrane. The A chain is the catalytic subunit. The sequence is that of A-type ATP synthase subunit A from Thermococcus kodakarensis (strain ATCC BAA-918 / JCM 12380 / KOD1) (Pyrococcus kodakaraensis (strain KOD1)).